Reading from the N-terminus, the 332-residue chain is uncharacterized protein (332 aa).

Residues 27-47 form a helical membrane-spanning segment; it reads CAIVFLCVLLILPFLSCCTSL.

The protein localises to the membrane. This is an uncharacterized protein from Treponema pallidum (strain Nichols).